A 199-amino-acid chain; its full sequence is 7-methyl-GTP pyrophosphatase (199 aa).

The active-site Proton acceptor is Asp74.

Belongs to the Maf family. YceF subfamily. A divalent metal cation is required as a cofactor.

It is found in the cytoplasm. It catalyses the reaction N(7)-methyl-GTP + H2O = N(7)-methyl-GMP + diphosphate + H(+). Functionally, nucleoside triphosphate pyrophosphatase that hydrolyzes 7-methyl-GTP (m(7)GTP). May have a dual role in cell division arrest and in preventing the incorporation of modified nucleotides into cellular nucleic acids. The protein is 7-methyl-GTP pyrophosphatase of Cupriavidus metallidurans (strain ATCC 43123 / DSM 2839 / NBRC 102507 / CH34) (Ralstonia metallidurans).